A 147-amino-acid chain; its full sequence is Protein BUD31 homolog (147 aa).

The Nuclear localization signal motif lies at 8-12 (RRVRK).

The protein belongs to the BUD31 (G10) family. Identified in the spliceosome C complex.

Its subcellular location is the nucleus. Its function is as follows. Involved in pre-mRNA splicing process. In Caenorhabditis elegans, this protein is Protein BUD31 homolog.